Here is a 322-residue protein sequence, read N- to C-terminus: MVMRKLQLPLSQTQKVRFERAIERLQSLSSSANSDASVIVTDSIPVNHDDAFLKGHGTSEVDGELLATVCGVVERVDKLVYVRTLRARYKPEVGDIVVGRVIEVAQKRWRVELNFNQDGVLMLSSMNMPDGIQRRRTSVDELNMRNIFVEHDVVCAEVRNFQHDGSLQLQARSQKYGKLEKGQLLKVDPYLVKRSKHHFHYVESLGIDLIIGCNGFIWVGEHVEVRDPMAIDDQKDEEMISSSSTGKEQSHIPLETRQTICRIGNAIRVLSNLGFTVTLEVIMETVNLSNSKNIDIHDMLGSEFHVVVAENEAERRRTKRKK.

An S1 motif domain is found at 94 to 172 (GDIVVGRVIE…HDGSLQLQAR (79 aa)). In terms of domain architecture, KH spans 182 to 237 (GQLLKVDPYLVKRSKHHFHYVESLGIDLIIGCNGFIWVGEHVEVRDPMAIDDQKDE).

This sequence belongs to the RRP4 family. Component of the RNA exosome complex. Interacts with RPP41. Expressed in roots, stems, rosette and cauline leaves, flowers and siliques.

It localises to the cytoplasm. It is found in the nucleus. The protein resides in the nucleolus. Functionally, non-catalytic component of the RNA exosome complex which has 3'-&gt;5' exoribonuclease activity and participates in a multitude of cellular RNA processing, maturation and degradation events. In vitro, is an active and distributive 3'-&gt;5' exonuclease requiring a free 3'-OH on the substrate and releasing nucleoside 5'-monophosphates. Required for normal embryo development. This is Exosome complex component RRP4 homolog from Arabidopsis thaliana (Mouse-ear cress).